An 898-amino-acid polypeptide reads, in one-letter code: Eukaryotic translation initiation factor 3 subunit C (898 aa).

A compositionally biased stretch (basic and acidic residues) spans 1 to 10 (MSRFFHAKED). Disordered regions lie at residues 1–38 (MSRFFHAKEDSDSDTSSSEDEVEDQKVNKSAKFRDDLD) and 162–238 (VTDY…SVTK). Over residues 11-23 (SDSDTSSSEDEVE) the composition is skewed to acidic residues. Residues 24–37 (DQKVNKSAKFRDDL) show a composition bias toward basic and acidic residues. Acidic residues predominate over residues 170–187 (DEDGYETPEDEDDDDFGE). Residues 189-202 (SESKAEKSPGKPSE) show a composition bias toward basic and acidic residues. The segment covering 209-218 (SDSDSDDDDS) has biased composition (acidic residues). The span at 219–228 (SNWSSEPESN) shows a compositional bias: low complexity. Residues 630–806 (YHMHINVELM…DCLIMHRVEP (177 aa)) form the PCI domain. The segment at 829-898 (QILEPRTGRG…RRHPQKPRAF (70 aa)) is disordered. Composition is skewed to basic and acidic residues over residues 850-859 (RNERQGDKQK) and 866-878 (GERRGGQGQDGKR). Over residues 888-898 (QRRHPQKPRAF) the composition is skewed to basic residues.

This sequence belongs to the eIF-3 subunit C family. In terms of assembly, component of the eukaryotic translation initiation factor 3 (eIF-3) complex.

It is found in the cytoplasm. In terms of biological role, component of the eukaryotic translation initiation factor 3 (eIF-3) complex, which is involved in protein synthesis of a specialized repertoire of mRNAs and, together with other initiation factors, stimulates binding of mRNA and methionyl-tRNAi to the 40S ribosome. The eIF-3 complex specifically targets and initiates translation of a subset of mRNAs involved in cell proliferation. This chain is Eukaryotic translation initiation factor 3 subunit C, found in Caenorhabditis elegans.